Here is a 252-residue protein sequence, read N- to C-terminus: Phosphate import ATP-binding protein PstB 1 (252 aa).

The region spanning 6-247 (LKVNDLSVYY…PQKQETEDYI (242 aa)) is the ABC transporter domain. 38-45 (GPSGSGKS) contributes to the ATP binding site.

It belongs to the ABC transporter superfamily. Phosphate importer (TC 3.A.1.7) family. The complex is composed of two ATP-binding proteins (PstB), two transmembrane proteins (PstC and PstA) and a solute-binding protein (PstS).

It is found in the cell membrane. It carries out the reaction phosphate(out) + ATP + H2O = ADP + 2 phosphate(in) + H(+). Functionally, part of the ABC transporter complex PstSACB involved in phosphate import. Responsible for energy coupling to the transport system. This Streptococcus mutans serotype c (strain ATCC 700610 / UA159) protein is Phosphate import ATP-binding protein PstB 1.